Consider the following 111-residue polypeptide: Large ribosomal subunit protein eL33z (111 aa).

Belongs to the eukaryotic ribosomal protein eL33 family.

The chain is Large ribosomal subunit protein eL33z (RPL35AB) from Arabidopsis thaliana (Mouse-ear cress).